The following is a 469-amino-acid chain: Protein RUFY3 (469 aa).

Threonine 5 and threonine 12 each carry phosphothreonine. Tyrosine 27, serine 34, and serine 49 each carry phosphoserine. Phosphothreonine is present on threonine 51. A Phosphoserine modification is found at aspartate 53. The region spanning 95-227 (DSDYAPLQQF…IDANFCMKGE (133 aa)) is the RUN domain. 2 coiled-coil regions span residues 271–362 (NRHL…VEKE) and 422–463 (KSEL…AANK). Basic and acidic residues predominate over residues 321–337 (SYLLESNRKGPKQDRTA). A disordered region spans residues 321-342 (SYLLESNRKGPKQDRTAEGQAL).

As to quaternary structure, interacts with PAK1. Interacts (via C-terminus) with Ras-related Rab-5 proteins. Interacts (via C-terminus) with Ras-related Rap-2 proteins. Interacts with PIK3CA and PIK3R1. Interacts (via N-terminus) with FSCN1; this interaction induces neuron axon development. Interacts with DBN1. Interacts (via the second coiled coil) with GTP-, but not GDP-bound ARL8A and ARL8B. Interacts with dynactin/DCTN1 and the dynein intermediate chain DYNC1I1/2. Directly interacts with DYNC1LI1. Post-translationally, phosphorylated by PAK1. Isoform 1 is partially phosphorylated. In terms of tissue distribution, expressed in brain (at protein level).

It localises to the cytoplasm. It is found in the endomembrane system. The protein localises to the cell projection. The protein resides in the invadopodium. Its subcellular location is the growth cone. It localises to the perikaryon. It is found in the filopodium. The protein localises to the lamellipodium. The protein resides in the lysosome. Functionally, ARL8 effector that promotes the coupling of endolysosomes to dynein-dynactin for retrograde transport along microtubules. Acts by binding both GTP-bound ARL8 and dynein-dynactin. In nonneuronal cells, promotes concentration of endolysosomes in the juxtanuclear area. In hippocampal neurons, drives retrograde transport of endolysosomes from the axon to the soma. Plays a role in the generation of neuronal polarity formation and axon growth. Implicated in the formation of a single axon by developing neurons. May inhibit the formation of additional axons by inhibition of PI3K in minor neuronal processes. Plays a role in the formation of F-actin-enriched protrusive structures at the cell periphery. Plays a role in cytoskeletal organization by regulating the subcellular localization of FSCN1 and DBN1 at axonal growth cones. The protein is Protein RUFY3 of Mus musculus (Mouse).